A 161-amino-acid polypeptide reads, in one-letter code: MKNNNVTEKELFYILDLFEHMKVTYWLDGGWGVDVLTGKQQREHRDIDIDFDAQHTQKVIQKLEDIGYKIEVHWMPSRMELKHEEYGYLDIHPINLNDDGSITQANPEGGNYVFQNDWFSETNYKDRKIPCISKEAQLLFHSGYDLTETDHFDIKNLKSIT.

The polypeptide is Lincosamide resistance protein (linA) (Staphylococcus haemolyticus).